A 216-amino-acid chain; its full sequence is Small ribosomal subunit protein uS3c (216 aa).

Residues phenylalanine 43–asparagine 115 enclose the KH type-2 domain.

The protein belongs to the universal ribosomal protein uS3 family. In terms of assembly, part of the 30S ribosomal subunit.

The protein resides in the plastid. It localises to the chloroplast. The polypeptide is Small ribosomal subunit protein uS3c (rps3) (Emiliania huxleyi (Coccolithophore)).